The following is a 448-amino-acid chain: Exodeoxyribonuclease 7 large subunit (448 aa).

It belongs to the XseA family. Heterooligomer composed of large and small subunits.

Its subcellular location is the cytoplasm. The enzyme catalyses Exonucleolytic cleavage in either 5'- to 3'- or 3'- to 5'-direction to yield nucleoside 5'-phosphates.. Functionally, bidirectionally degrades single-stranded DNA into large acid-insoluble oligonucleotides, which are then degraded further into small acid-soluble oligonucleotides. The protein is Exodeoxyribonuclease 7 large subunit of Shewanella sp. (strain ANA-3).